A 161-amino-acid chain; its full sequence is Globin CTT-VIIB-10 (161 aa).

Residues 1–16 form the signal peptide; it reads MKFFAVLALCIVGAIA. A Globin domain is found at 18-161; it reads PLTADEASLV…NTFAIVVPRL (144 aa). Heme b contacts are provided by histidine 76 and histidine 111.

This sequence belongs to the globin family. Homodimer.

The polypeptide is Globin CTT-VIIB-10 (CTT-7B10) (Chironomus thummi thummi (Midge)).